The primary structure comprises 250 residues: Proteasome subunit alpha type-7-like (250 aa).

O-linked (GlcNAc) serine glycosylation is present at S132.

The protein belongs to the peptidase T1A family. The 26S proteasome consists of a 20S proteasome core and two 19S regulatory subunits. The 20S proteasome core is a barrel-shaped complex made of 28 subunits that are arranged in four stacked rings. The two outer rings are each formed by seven alpha subunits, and the two inner rings are formed by seven beta subunits. The proteolytic activity is exerted by three beta-subunits PSMB5, PSMB6 and PSMB7. PSMA7 interacts directly with the PSMG1-PSMG2 heterodimer which promotes 20S proteasome assembly. Interacts with HIF1A. Interacts with RAB7A. Interacts with PRKN. Interacts with ABL1 and ABL2. Interacts with EMAP2. Interacts with MAVS.

It is found in the cytoplasm. It localises to the nucleus. Its function is as follows. Component of the 20S core proteasome complex involved in the proteolytic degradation of most intracellular proteins. This complex plays numerous essential roles within the cell by associating with different regulatory particles. Associated with two 19S regulatory particles, forms the 26S proteasome and thus participates in the ATP-dependent degradation of ubiquitinated proteins. The 26S proteasome plays a key role in the maintenance of protein homeostasis by removing misfolded or damaged proteins that could impair cellular functions, and by removing proteins whose functions are no longer required. Associated with the PA200 or PA28, the 20S proteasome mediates ubiquitin-independent protein degradation. This type of proteolysis is required in several pathways including spermatogenesis (20S-PA200 complex) or generation of a subset of MHC class I-presented antigenic peptides (20S-PA28 complex). Inhibits the transactivation function of HIF-1A under both normoxic and hypoxia-mimicking conditions. The interaction with EMAP2 increases the proteasome-mediated HIF-1A degradation under the hypoxic conditions. Plays a role in hepatitis C virus internal ribosome entry site-mediated translation. Mediates nuclear translocation of the androgen receptor (AR) and thereby enhances androgen-mediated transactivation. Promotes MAVS degradation and thereby negatively regulates MAVS-mediated innate immune response. In Macaca fascicularis (Crab-eating macaque), this protein is Proteasome subunit alpha type-7-like (PSMA7L).